Here is a 212-residue protein sequence, read N- to C-terminus: ATP-dependent dethiobiotin synthetase BioD (212 aa).

ATP is bound at residue 12–17 (DCGKTF). Position 16 (T16) interacts with Mg(2+). K33 is a catalytic residue. S37 is a substrate binding site. Residues D50, 110 to 113 (EGAG), and 170 to 171 (NC) each bind ATP. Mg(2+) is bound by residues D50 and E110.

It belongs to the dethiobiotin synthetase family. As to quaternary structure, homodimer. It depends on Mg(2+) as a cofactor.

The protein resides in the cytoplasm. It catalyses the reaction (7R,8S)-7,8-diammoniononanoate + CO2 + ATP = (4R,5S)-dethiobiotin + ADP + phosphate + 3 H(+). The protein operates within cofactor biosynthesis; biotin biosynthesis; biotin from 7,8-diaminononanoate: step 1/2. In terms of biological role, catalyzes a mechanistically unusual reaction, the ATP-dependent insertion of CO2 between the N7 and N8 nitrogen atoms of 7,8-diaminopelargonic acid (DAPA, also called 7,8-diammoniononanoate) to form a ureido ring. In Legionella pneumophila (strain Corby), this protein is ATP-dependent dethiobiotin synthetase BioD.